The chain runs to 167 residues: NAD(P)H-quinone oxidoreductase subunit I, chloroplastic (167 aa).

2 consecutive 4Fe-4S ferredoxin-type domains span residues 55–84 (GRIHFEFDKCIACEVCVRVCPIDLPVVDWK) and 95–124 (LNYSIDFGICIFCGNCVEYCPTNCLSMTEE). [4Fe-4S] cluster-binding residues include cysteine 64, cysteine 67, cysteine 70, cysteine 74, cysteine 104, cysteine 107, cysteine 110, and cysteine 114.

Belongs to the complex I 23 kDa subunit family. As to quaternary structure, NDH is composed of at least 16 different subunits, 5 of which are encoded in the nucleus. The cofactor is [4Fe-4S] cluster.

Its subcellular location is the plastid. The protein localises to the chloroplast thylakoid membrane. It catalyses the reaction a plastoquinone + NADH + (n+1) H(+)(in) = a plastoquinol + NAD(+) + n H(+)(out). The catalysed reaction is a plastoquinone + NADPH + (n+1) H(+)(in) = a plastoquinol + NADP(+) + n H(+)(out). In terms of biological role, NDH shuttles electrons from NAD(P)H:plastoquinone, via FMN and iron-sulfur (Fe-S) centers, to quinones in the photosynthetic chain and possibly in a chloroplast respiratory chain. The immediate electron acceptor for the enzyme in this species is believed to be plastoquinone. Couples the redox reaction to proton translocation, and thus conserves the redox energy in a proton gradient. The polypeptide is NAD(P)H-quinone oxidoreductase subunit I, chloroplastic (Aethionema grandiflorum (Persian stone-cress)).